The following is a 202-amino-acid chain: Small ribosomal subunit protein uS4 (202 aa).

The segment at 15-42 (LGDLPGLTRKAAKRSYPPGQHGQARRKR) is disordered. In terms of domain architecture, S4 RNA-binding spans 90–152 (NRLDNVCFRL…KCSKQLAEGN (63 aa)).

This sequence belongs to the universal ribosomal protein uS4 family. As to quaternary structure, part of the 30S ribosomal subunit. Contacts protein S5. The interaction surface between S4 and S5 is involved in control of translational fidelity.

One of the primary rRNA binding proteins, it binds directly to 16S rRNA where it nucleates assembly of the body of the 30S subunit. Functionally, with S5 and S12 plays an important role in translational accuracy. This is Small ribosomal subunit protein uS4 from Parasynechococcus marenigrum (strain WH8102).